The chain runs to 496 residues: Probable cytosol aminopeptidase (496 aa).

Residues Lys251 and Asp256 each coordinate Mn(2+). Lys263 is a catalytic residue. Mn(2+)-binding residues include Asp274, Asp333, and Glu335. Arg337 is an active-site residue.

The protein belongs to the peptidase M17 family. Requires Mn(2+) as cofactor.

It is found in the cytoplasm. It carries out the reaction Release of an N-terminal amino acid, Xaa-|-Yaa-, in which Xaa is preferably Leu, but may be other amino acids including Pro although not Arg or Lys, and Yaa may be Pro. Amino acid amides and methyl esters are also readily hydrolyzed, but rates on arylamides are exceedingly low.. The enzyme catalyses Release of an N-terminal amino acid, preferentially leucine, but not glutamic or aspartic acids.. Functionally, presumably involved in the processing and regular turnover of intracellular proteins. Catalyzes the removal of unsubstituted N-terminal amino acids from various peptides. The chain is Probable cytosol aminopeptidase from Acidovorax ebreus (strain TPSY) (Diaphorobacter sp. (strain TPSY)).